The following is a 136-amino-acid chain: Small ribosomal subunit protein eS12 (136 aa).

Belongs to the eukaryotic ribosomal protein eS12 family.

This chain is Small ribosomal subunit protein eS12 (rps12), found in Dictyostelium discoideum (Social amoeba).